Reading from the N-terminus, the 510-residue chain is Leucine-rich repeat protein lrrA (510 aa).

20 LRR repeats span residues 14–34, 35–59, 60–82, 84–106, 107–130, 132–152, 153–176, 177–200, 202–222, 224–245, 246–270, 272–292, 293–315, 316–340, 341–363, 365–386, 387–408, 410–432, 433–458, and 460–478; these read YRKR…PPTI, GALQ…IGKL, SKVE…IGSL, TLKQ…NIGA, LKNL…ISNC, ALEY…EFGK, LYNL…ISGW, VKLE…CLLG, LSTL…LSSM, SLTN…LSNL, RQLK…LLSE, IELD…IATL, INLQ…VGNL, INLQ…IGKL, VNLK…IASM, ALKE…IGEL, SGLT…SFGN, SELQ…LDGL, KSCT…LIGL, and ILDV…IVMK.

It localises to the cytoplasm. In terms of biological role, involved in cytoskeleton remodeling, which is needed for normal chemotactic aggregation and efficient cell sorting during multicellular morphogenesis. This Dictyostelium discoideum (Social amoeba) protein is Leucine-rich repeat protein lrrA (lrrA).